We begin with the raw amino-acid sequence, 393 residues long: MQFDNIDSALMALKNGETIIVVDDENRENEGDLVAVTEWMNDNTINFMAKEARGLICAPVSKDIAQRLDLVQMVDDNSDIFGTQFTVSIDHVDTTTGISAYERTLTAKKLIDPSSEAKDFNRPGHLFPLVAQDKGVLARNGHTEAAVDLAKLTGAKPAGVICEIMNDDGTMAKGQDLQKFKEKHQLKMITIDDLIEYRKKLEPEIEFKAKVKMPTDFGTFDMYGFKATYTDEEIVVLTKGAIRQHENVRLHSACLTGDIFHSQRCDCGAQLESSMKYINEHGGMIIYLPQEGRGIGLLNKLRAYELIEQGYDTVTANLALGFDEDLRDYHIAAQILKYFNIEHINLLSNNPSKFEGLKQYGIDIAERIEVIVPETVHNHDYMETKKIKMGHLI.

Residues 1 to 200 are DHBP synthase; sequence MQFDNIDSAL…IDDLIEYRKK (200 aa). D-ribulose 5-phosphate contacts are provided by residues 27 to 28, Asp32, 139 to 143, and Glu163; these read RE and RNGHT. Residue Glu28 coordinates Mg(2+). His142 is a Mg(2+) binding site. The tract at residues 201–393 is GTP cyclohydrolase II; the sequence is LEPEIEFKAK…TKKIKMGHLI (193 aa). A GTP-binding site is contributed by 249 to 253; the sequence is RLHSA. Positions 254, 265, and 267 each coordinate Zn(2+). GTP is bound by residues Gln270, 291–293, and Thr313; that span reads EGR. The Proton acceptor; for GTP cyclohydrolase activity role is filled by Asp325. Arg327 serves as the catalytic Nucleophile; for GTP cyclohydrolase activity. 2 residues coordinate GTP: Ser348 and Lys353.

It in the N-terminal section; belongs to the DHBP synthase family. This sequence in the C-terminal section; belongs to the GTP cyclohydrolase II family. Mg(2+) is required as a cofactor. The cofactor is Mn(2+). Zn(2+) serves as cofactor.

It catalyses the reaction D-ribulose 5-phosphate = (2S)-2-hydroxy-3-oxobutyl phosphate + formate + H(+). It carries out the reaction GTP + 4 H2O = 2,5-diamino-6-hydroxy-4-(5-phosphoribosylamino)-pyrimidine + formate + 2 phosphate + 3 H(+). Its pathway is cofactor biosynthesis; riboflavin biosynthesis; 2-hydroxy-3-oxobutyl phosphate from D-ribulose 5-phosphate: step 1/1. It participates in cofactor biosynthesis; riboflavin biosynthesis; 5-amino-6-(D-ribitylamino)uracil from GTP: step 1/4. In terms of biological role, catalyzes the conversion of D-ribulose 5-phosphate to formate and 3,4-dihydroxy-2-butanone 4-phosphate. Its function is as follows. Catalyzes the conversion of GTP to 2,5-diamino-6-ribosylamino-4(3H)-pyrimidinone 5'-phosphate (DARP), formate and pyrophosphate. The polypeptide is Riboflavin biosynthesis protein RibBA (Staphylococcus aureus (strain MSSA476)).